The following is a 745-amino-acid chain: Catalase-peroxidase (745 aa).

The segment at residues 97-223 (WHSAGTYRTG…LAAVQMGLIY (127 aa)) is a cross-link (tryptophyl-tyrosyl-methioninium (Trp-Tyr) (with M-249)). The Proton acceptor role is filled by His98. A cross-link (tryptophyl-tyrosyl-methioninium (Tyr-Met) (with W-97)) is located at residues 223-249 (YVNPEGPDGSPDPWASARDIRMTFARM). His264 contacts heme b. The interval 345-368 (KQWQPVNPKPEDLAPGAHSPDRRV) is disordered.

This sequence belongs to the peroxidase family. Peroxidase/catalase subfamily. As to quaternary structure, homodimer or homotetramer. Heme b serves as cofactor. In terms of processing, formation of the three residue Trp-Tyr-Met cross-link is important for the catalase, but not the peroxidase activity of the enzyme.

It catalyses the reaction H2O2 + AH2 = A + 2 H2O. The catalysed reaction is 2 H2O2 = O2 + 2 H2O. Bifunctional enzyme with both catalase and broad-spectrum peroxidase activity. This chain is Catalase-peroxidase, found in Phenylobacterium zucineum (strain HLK1).